The following is a 100-amino-acid chain: Urease subunit gamma (100 aa).

Belongs to the urease gamma subunit family. As to quaternary structure, heterotrimer of UreA (gamma), UreB (beta) and UreC (alpha) subunits. Three heterotrimers associate to form the active enzyme.

The protein resides in the cytoplasm. The catalysed reaction is urea + 2 H2O + H(+) = hydrogencarbonate + 2 NH4(+). Its pathway is nitrogen metabolism; urea degradation; CO(2) and NH(3) from urea (urease route): step 1/1. The protein is Urease subunit gamma of Edwardsiella ictaluri (strain 93-146).